The primary structure comprises 91 residues: Acylphosphatase (91 aa).

Positions 5-91 (CLHAYVGGRV…QGIAGFIVRR (87 aa)) constitute an Acylphosphatase-like domain. Residues Arg-20 and Asn-38 contribute to the active site.

This sequence belongs to the acylphosphatase family.

The enzyme catalyses an acyl phosphate + H2O = a carboxylate + phosphate + H(+). The polypeptide is Acylphosphatase (acyP) (Pseudomonas paraeruginosa (strain DSM 24068 / PA7) (Pseudomonas aeruginosa (strain PA7))).